A 1041-amino-acid chain; its full sequence is FHIP family protein CG3558 (1041 aa).

A Phosphoserine modification is found at Ser-490. 5 disordered regions span residues 619-648, 792-818, 858-879, 903-947, and 959-986; these read RPADEESEATDTTVATTASEADMDHNSSSL, KGNEGSPMHHSQQQQMVTNSGQQQGQL, SMFSRKSASTSTAPPNGSSASS, DGRG…SNSS, and SNTTTHSASTLHGLDGGPSTGGFNSEPA. The span at 628–637 shows a compositional bias: polar residues; that stretch reads TDTTVATTAS. At Ser-797 the chain carries Phosphoserine. A compositionally biased stretch (polar residues) spans 800–818; the sequence is HHSQQQQMVTNSGQQQGQL. Positions 903–925 are enriched in polar residues; that stretch reads DGRGISQAQTSAGTCETSLSTQP. Residues 927–947 show a composition bias toward low complexity; that stretch reads AGASRTGANATSTAASGSNSS. Residues 959–968 show a composition bias toward polar residues; sequence SNTTTHSAST.

This sequence belongs to the FHIP family.

The polypeptide is FHIP family protein CG3558 (Drosophila melanogaster (Fruit fly)).